The following is a 147-amino-acid chain: 16 kDa phloem protein 2 (147 aa).

The region spanning 1 to 103 is the C2 domain; it reads MPHGTLEVVL…FVEGSIPPTA (103 aa). Positions 20, 26, 73, 75, and 81 each coordinate Ca(2+). Residues 126 to 147 are disordered; sequence ENRSRGMDEESYGGWKNSEASY.

Ca(2+) serves as cofactor.

Functionally, binds to both sense and antisense RNA. Can also bind sheared DNA and dodecamer DNA with a low affinity. Interacts with mesophyll plasmodesmata to mediate its own cell-to-cell transport and potentiate RNA trafficking. May play a role in plant defense signaling. The chain is 16 kDa phloem protein 2 from Arabidopsis thaliana (Mouse-ear cress).